The chain runs to 306 residues: tRNA pseudouridine synthase B (306 aa).

Catalysis depends on D43, which acts as the Nucleophile.

Belongs to the pseudouridine synthase TruB family. Type 1 subfamily.

The catalysed reaction is uridine(55) in tRNA = pseudouridine(55) in tRNA. Responsible for synthesis of pseudouridine from uracil-55 in the psi GC loop of transfer RNAs. The chain is tRNA pseudouridine synthase B from Heliobacterium modesticaldum (strain ATCC 51547 / Ice1).